The primary structure comprises 207 residues: MPNVALFKQDGTQNGEITLNEEIFGIEPNESVVYDAIIMQRASLRQGTHAVKNRSAVRGGGRKPWRQKGTGRARQGSIRSPQWRGGGVVFGPTPRSYSYKFPKKVRRLAMKSVLSDKVAENNLVAVEGLSFDAPKTKEFKQVLANLSIDTKVLVVLENGNDFAALSARNLPNVSVVTSDNVSVLDVVSANKVLATQTALTQIEEVLA.

Residues His49–Ile78 are disordered. A compositionally biased stretch (basic residues) spans Gly60–Gly71.

It belongs to the universal ribosomal protein uL4 family. As to quaternary structure, part of the 50S ribosomal subunit.

Functionally, one of the primary rRNA binding proteins, this protein initially binds near the 5'-end of the 23S rRNA. It is important during the early stages of 50S assembly. It makes multiple contacts with different domains of the 23S rRNA in the assembled 50S subunit and ribosome. Its function is as follows. Forms part of the polypeptide exit tunnel. The chain is Large ribosomal subunit protein uL4 from Enterococcus faecalis (strain ATCC 700802 / V583).